Reading from the N-terminus, the 285-residue chain is Nucleotide-binding protein Psyr_4150 (285 aa).

8 to 15 provides a ligand contact to ATP; the sequence is GRSGSGKS. A GTP-binding site is contributed by 60-63; the sequence is DARN.

This sequence belongs to the RapZ-like family.

In terms of biological role, displays ATPase and GTPase activities. This is Nucleotide-binding protein Psyr_4150 from Pseudomonas syringae pv. syringae (strain B728a).